Reading from the N-terminus, the 654-residue chain is Smc-like protein Sph3 (654 aa).

Coiled coils occupy residues 135-290 and 341-503; these read TDAI…LQTV and IRGT…LTAA.

The protein belongs to the Sph1/Sph2 family.

In terms of biological role, involved in cell-shape determination. Required for the formation of rods and wild-type-like motility. The polypeptide is Smc-like protein Sph3 (Haloferax volcanii (strain ATCC 29605 / DSM 3757 / JCM 8879 / NBRC 14742 / NCIMB 2012 / VKM B-1768 / DS2) (Halobacterium volcanii)).